Here is a 287-residue protein sequence, read N- to C-terminus: Formamidopyrimidine-DNA glycosylase (287 aa).

Catalysis depends on Pro-2, which acts as the Schiff-base intermediate with DNA. Residue Glu-3 is the Proton donor of the active site. Lys-61 (proton donor; for beta-elimination activity) is an active-site residue. DNA-binding residues include His-95, Arg-115, and Arg-157. An FPG-type zinc finger spans residues 243–277 (NVYGRADQPCRRCGEPVRREAFMNRSSFSCPRCQP). Catalysis depends on Arg-267, which acts as the Proton donor; for delta-elimination activity.

It belongs to the FPG family. Monomer. Requires Zn(2+) as cofactor.

It catalyses the reaction Hydrolysis of DNA containing ring-opened 7-methylguanine residues, releasing 2,6-diamino-4-hydroxy-5-(N-methyl)formamidopyrimidine.. The enzyme catalyses 2'-deoxyribonucleotide-(2'-deoxyribose 5'-phosphate)-2'-deoxyribonucleotide-DNA = a 3'-end 2'-deoxyribonucleotide-(2,3-dehydro-2,3-deoxyribose 5'-phosphate)-DNA + a 5'-end 5'-phospho-2'-deoxyribonucleoside-DNA + H(+). Its function is as follows. Involved in base excision repair of DNA damaged by oxidation or by mutagenic agents. Acts as a DNA glycosylase that recognizes and removes damaged bases. Has a preference for oxidized purines, such as 7,8-dihydro-8-oxoguanine (8-oxoG). Has AP (apurinic/apyrimidinic) lyase activity and introduces nicks in the DNA strand. Cleaves the DNA backbone by beta-delta elimination to generate a single-strand break at the site of the removed base with both 3'- and 5'-phosphates. This is Formamidopyrimidine-DNA glycosylase from Salinispora tropica (strain ATCC BAA-916 / DSM 44818 / JCM 13857 / NBRC 105044 / CNB-440).